The chain runs to 157 residues: Small ribosomal subunit protein uS7 (157 aa).

The protein belongs to the universal ribosomal protein uS7 family. Part of the 30S ribosomal subunit. Contacts proteins S9 and S11.

Its function is as follows. One of the primary rRNA binding proteins, it binds directly to 16S rRNA where it nucleates assembly of the head domain of the 30S subunit. Is located at the subunit interface close to the decoding center, probably blocks exit of the E-site tRNA. The polypeptide is Small ribosomal subunit protein uS7 (Leptospira biflexa serovar Patoc (strain Patoc 1 / Ames)).